The primary structure comprises 457 residues: Dihydrolipoyl dehydrogenase (457 aa).

FAD-binding positions include 32–40 (EKQYFGGVC), lysine 49, and alanine 113. Cysteine 40 and cysteine 45 are joined by a disulfide. Residues 178-182 (GGGVI), valine 235, and 262-265 (SIGR) each bind NAD(+). FAD contacts are provided by aspartate 303 and alanine 311. Residue histidine 437 is the Proton acceptor of the active site.

Belongs to the class-I pyridine nucleotide-disulfide oxidoreductase family. Homodimer. The cofactor is FAD.

Its subcellular location is the cytoplasm. It catalyses the reaction N(6)-[(R)-dihydrolipoyl]-L-lysyl-[protein] + NAD(+) = N(6)-[(R)-lipoyl]-L-lysyl-[protein] + NADH + H(+). Lipoamide dehydrogenase is a component of the alpha-ketoacid dehydrogenase complexes. The polypeptide is Dihydrolipoyl dehydrogenase (pdhD) (Mycoplasma genitalium (strain ATCC 33530 / DSM 19775 / NCTC 10195 / G37) (Mycoplasmoides genitalium)).